Reading from the N-terminus, the 813-residue chain is Calpain-7 (813 aa).

Residue Met-1 is modified to N-acetylmethionine. Phosphothreonine is present on Thr-95. The region spanning Arg-232–Pro-540 is the Calpain catalytic domain. Active-site residues include Cys-290, His-458, and Asn-478. A domain III region spans residues Ala-541 to Ala-701. Residues Gly-702–Gln-813 are domain N.

The protein belongs to the peptidase C2 family. Ubiquitous.

It localises to the nucleus. Its function is as follows. Calcium-regulated non-lysosomal thiol-protease. This is Calpain-7 (Capn7) from Mus musculus (Mouse).